The sequence spans 84 residues: Beta-mammal Tt1g (84 aa).

A signal peptide spans 1-20; it reads MKGMILFISCILLIGIVVEC. One can recognise an LCN-type CS-alpha/beta domain in the interval 21–82; it reads KEGYLMDHEG…VWERATNRCG (62 aa). 4 cysteine pairs are disulfide-bonded: C31-C81, C35-C57, C43-C62, and C47-C64. C81 is modified (cysteine amide).

The protein belongs to the long (4 C-C) scorpion toxin superfamily. Sodium channel inhibitor family. Beta subfamily. As to expression, expressed by the venom gland.

It is found in the secreted. Beta toxins modify sodium channel function in two ways: an excitatory effect (shifting the activation process to more negative potential) and/or a depressant effect (reducing the peak current). At concentration of 500 nM this toxin produces channel opening at more negative potentials in hNav1.2/SCN2A and hNav1.3/SCN3A, which shows the biggest effect. On the other hand the peak current is decreased in hNav1.4/SCN4A and hNav1.5/SCN5A channels, without apparent modification of the activation gate. This toxin is active against mammals. This Tityus trivittatus (Argentinean scorpion) protein is Beta-mammal Tt1g.